Reading from the N-terminus, the 60-residue chain is Large ribosomal subunit protein bL32 (60 aa).

The protein belongs to the bacterial ribosomal protein bL32 family.

The chain is Large ribosomal subunit protein bL32 from Thermosipho africanus (strain TCF52B).